The chain runs to 430 residues: tRNA(Ile)-lysidine synthase (430 aa).

Ser21–Ser26 is an ATP binding site.

It belongs to the tRNA(Ile)-lysidine synthase family.

It is found in the cytoplasm. It catalyses the reaction cytidine(34) in tRNA(Ile2) + L-lysine + ATP = lysidine(34) in tRNA(Ile2) + AMP + diphosphate + H(+). Ligates lysine onto the cytidine present at position 34 of the AUA codon-specific tRNA(Ile) that contains the anticodon CAU, in an ATP-dependent manner. Cytidine is converted to lysidine, thus changing the amino acid specificity of the tRNA from methionine to isoleucine. The chain is tRNA(Ile)-lysidine synthase from Salmonella typhi.